The following is an 838-amino-acid chain: Glutenin, high molecular weight subunit PW212 (838 aa).

The signal sequence occupies residues 1–21 (MAKRLVLFVAVVVALVALTVA). The disordered stretch occupies residues 122–794 (SYYPGQASPQ…GQQSGQGQQG (673 aa)). Residues 125 to 136 (PGQASPQRPGQG) show a composition bias toward low complexity. Residues 137–149 (QQPGQGQQSGQGQ) show a composition bias toward gly residues. Composition is skewed to low complexity over residues 150 to 172 (QGYYPTSPQQPGQWQQPEQGQPG), 179 to 208 (QQPGQLQQPAQGQQPGQGQQGRQPGQGQPG), 215 to 245 (QLQPGQLQQPAQGQQGQQPGQGQQGQQPGQG), 268 to 308 (QGQQ…GQSG), 315 to 356 (QQPG…PGQG), 364 to 416 (PGYY…PGQG), 445 to 473 (SPQQSGQGQQPGQLQQSAQGQKGQQPGQG), 481 to 532 (QGQQ…YPTS), 549 to 643 (QQPG…QGQP), 654 to 677 (GQGQQPGQWQQPGQWQQPGQGQPG), 699 to 719 (QQPGQGQQPGQWQQSGQGQHG), and 729 to 773 (GQGQ…GQQG).

This sequence belongs to the gliadin/glutenin family. Disulfide-bridge linked aggregates.

Its function is as follows. Glutenins are high-molecular weight seed storage proteins of wheat endosperm. Thought to be responsible for the visco-elastic property of wheat dough. This is Glutenin, high molecular weight subunit PW212 from Triticum aestivum (Wheat).